The following is a 274-amino-acid chain: Carbonic anhydrase (274 aa).

The Zn(2+) site is built by Cys39, His98, and Cys101. Positions 214 to 274 (EDEYAPHPNS…QAERIYRGSR (61 aa)) are disordered. Basic and acidic residues-rich tracts occupy residues 234 to 245 (PGKERPGREKAT) and 261 to 274 (LPREQAERIYRGSR).

It belongs to the beta-class carbonic anhydrase family. A hexamer formed by a trimer of dimers. Interacts with the first 260 residues of CcmM; both the N-terminal 206 residues and the C-terminal tail contribute to CcmM binding. Interacts with full-length and the N-terminal 249 residues of CcmM. A probable CcmM-CcaA-CcmN complex as well as a CcaA-RuBisCO-CcmM complex can also be isolated. Zn(2+) is required as a cofactor.

The protein resides in the carboxysome. The catalysed reaction is hydrogencarbonate + H(+) = CO2 + H2O. Its activity is regulated as follows. Inhibited by ethoxyzolamide. In terms of biological role, reversible hydration of carbon dioxide. Essential to photosynthetic carbon dioxide fixation, supplies CO(2) to RuBisCO (ribulose bisphosphate carboxylase, rbcL-rbcS) in the carboxysome. In Synechocystis sp. (strain ATCC 27184 / PCC 6803 / Kazusa), this protein is Carbonic anhydrase.